The sequence spans 151 residues: Large-conductance mechanosensitive channel (151 aa).

The next 2 helical transmembrane spans lie at 12–32 (GNIV…ALVT) and 71–91 (VLLS…FLVV). Residues 125 to 151 (NSNSSGRHEAPGTAGTPPPNYGPRADT) are disordered.

Belongs to the MscL family. As to quaternary structure, homopentamer.

It localises to the cell membrane. In terms of biological role, channel that opens in response to stretch forces in the membrane lipid bilayer. May participate in the regulation of osmotic pressure changes within the cell. The chain is Large-conductance mechanosensitive channel from Mycobacterium ulcerans (strain Agy99).